A 227-amino-acid polypeptide reads, in one-letter code: PKHD-type hydroxylase Dtpsy_0528 (227 aa).

The 101-residue stretch at Thr78–Ser178 folds into the Fe2OG dioxygenase domain. Positions 96, 98, and 159 each coordinate Fe cation. Residue Arg169 coordinates 2-oxoglutarate.

Fe(2+) serves as cofactor. The cofactor is L-ascorbate.

The sequence is that of PKHD-type hydroxylase Dtpsy_0528 from Acidovorax ebreus (strain TPSY) (Diaphorobacter sp. (strain TPSY)).